We begin with the raw amino-acid sequence, 306 residues long: Ribonuclease Z (306 aa).

The Zn(2+) site is built by H63, H65, D67, H68, H142, D213, and H271. D67 (proton acceptor) is an active-site residue.

Belongs to the RNase Z family. As to quaternary structure, homodimer. The cofactor is Zn(2+).

It carries out the reaction Endonucleolytic cleavage of RNA, removing extra 3' nucleotides from tRNA precursor, generating 3' termini of tRNAs. A 3'-hydroxy group is left at the tRNA terminus and a 5'-phosphoryl group is left at the trailer molecule.. Zinc phosphodiesterase, which displays some tRNA 3'-processing endonuclease activity. Probably involved in tRNA maturation, by removing a 3'-trailer from precursor tRNA. The protein is Ribonuclease Z of Oceanobacillus iheyensis (strain DSM 14371 / CIP 107618 / JCM 11309 / KCTC 3954 / HTE831).